A 224-amino-acid polypeptide reads, in one-letter code: Cytochrome c biogenesis ATP-binding export protein CcmA (224 aa).

In terms of domain architecture, ABC transporter spans 1 to 220 (MQNAEAAPAL…EYAHAEVVGA (220 aa)). Residue 40 to 47 (GANGSGKT) coordinates ATP.

It belongs to the ABC transporter superfamily. CcmA exporter (TC 3.A.1.107) family. In terms of assembly, the complex is composed of two ATP-binding proteins (CcmA) and two transmembrane proteins (CcmB).

Its subcellular location is the cell inner membrane. It carries out the reaction heme b(in) + ATP + H2O = heme b(out) + ADP + phosphate + H(+). Its function is as follows. Part of the ABC transporter complex CcmAB involved in the biogenesis of c-type cytochromes; once thought to export heme, this seems not to be the case, but its exact role is uncertain. Responsible for energy coupling to the transport system. The protein is Cytochrome c biogenesis ATP-binding export protein CcmA of Bordetella parapertussis (strain 12822 / ATCC BAA-587 / NCTC 13253).